The chain runs to 360 residues: Photosystem II protein D1 3 (360 aa).

3 helical membrane-spanning segments follow: residues 29 to 46 (YVGWFGVLMIPTLLAATV), 118 to 133 (HFLIGCACYLGRQWEL), and 142 to 156 (WICVAYSAPLASATA). His-118 is a chlorophyll a binding site. Tyr-126 provides a ligand contact to pheophytin a. Positions 170 and 189 each coordinate [CaMn4O5] cluster. Residues 197–218 (FHMLGVAGVFGGSLFSAMHGSL) traverse the membrane as a helical segment. His-198 provides a ligand contact to chlorophyll a. A quinone-binding positions include His-215 and 264–265 (SF). His-215 contributes to the Fe cation binding site. His-272 lines the Fe cation pocket. The chain crosses the membrane as a helical span at residues 274 to 288 (FLAAWPVIGIWFTAL). His-332, Glu-333, Asp-342, and Ala-344 together coordinate [CaMn4O5] cluster. The propeptide occupies 345–360 (AGEVAPVALTAPAING).

It belongs to the reaction center PufL/M/PsbA/D family. PSII is composed of 1 copy each of membrane proteins PsbA, PsbB, PsbC, PsbD, PsbE, PsbF, PsbH, PsbI, PsbJ, PsbK, PsbL, PsbM, PsbT, PsbX, PsbY, PsbZ, Psb30/Ycf12, peripheral proteins PsbO, CyanoQ (PsbQ), PsbU, PsbV and a large number of cofactors. It forms dimeric complexes. The D1/D2 heterodimer binds P680, chlorophylls that are the primary electron donor of PSII, and subsequent electron acceptors. It shares a non-heme iron and each subunit binds pheophytin, quinone, additional chlorophylls, carotenoids and lipids. D1 provides most of the ligands for the Mn4-Ca-O5 cluster of the oxygen-evolving complex (OEC). There is also a Cl(-1) ion associated with D1 and D2, which is required for oxygen evolution. The PSII complex binds additional chlorophylls, carotenoids and specific lipids. is required as a cofactor. Tyr-161 forms a radical intermediate that is referred to as redox-active TyrZ, YZ or Y-Z. In terms of processing, C-terminally processed by CtpA; processing is essential to allow assembly of the oxygen-evolving complex and thus photosynthetic growth.

It is found in the cellular thylakoid membrane. It carries out the reaction 2 a plastoquinone + 4 hnu + 2 H2O = 2 a plastoquinol + O2. Its function is as follows. Photosystem II (PSII) is a light-driven water:plastoquinone oxidoreductase that uses light energy to abstract electrons from H(2)O, generating O(2) and a proton gradient subsequently used for ATP formation. It consists of a core antenna complex that captures photons, and an electron transfer chain that converts photonic excitation into a charge separation. The D1/D2 (PsbA/PsbD) reaction center heterodimer binds P680, the primary electron donor of PSII as well as several subsequent electron acceptors. The sequence is that of Photosystem II protein D1 3 from Trichormus variabilis (strain ATCC 29413 / PCC 7937) (Anabaena variabilis).